We begin with the raw amino-acid sequence, 801 residues long: Conserved oligomeric Golgi complex subunit 4 (801 aa).

The interval 397–427 (IRSPSGDGDDEENEEARQERHRLRKEAKEQK) is disordered.

Belongs to the COG4 family. In terms of assembly, component of the conserved oligomeric Golgi complex which is composed of eight different subunits and is required for normal Golgi morphology and localization.

It localises to the golgi apparatus membrane. Functionally, required for normal Golgi function. The protein is Conserved oligomeric Golgi complex subunit 4 (cogc-4) of Caenorhabditis elegans.